The chain runs to 239 residues: Phosphoribosylaminoimidazole-succinocarboxamide synthase (239 aa).

Belongs to the SAICAR synthetase family.

It carries out the reaction 5-amino-1-(5-phospho-D-ribosyl)imidazole-4-carboxylate + L-aspartate + ATP = (2S)-2-[5-amino-1-(5-phospho-beta-D-ribosyl)imidazole-4-carboxamido]succinate + ADP + phosphate + 2 H(+). The protein operates within purine metabolism; IMP biosynthesis via de novo pathway; 5-amino-1-(5-phospho-D-ribosyl)imidazole-4-carboxamide from 5-amino-1-(5-phospho-D-ribosyl)imidazole-4-carboxylate: step 1/2. The sequence is that of Phosphoribosylaminoimidazole-succinocarboxamide synthase from Dichelobacter nodosus (strain VCS1703A).